Reading from the N-terminus, the 317-residue chain is Melanocyte-stimulating hormone receptor (317 aa).

A disordered region spans residues 1–28 (MPMQGAQGRLRGSLNATPPTTPHSGLAG). Topologically, residues 1–37 (MPMQGAQGRLRGSLNATPPTTPHSGLAGNQTGPWCLE) are extracellular. An N-linked (GlcNAc...) asparagine glycan is attached at Asn-29. Residues 38-63 (VSIPDELFLSLGLVSLVENMLVVAAI) traverse the membrane as a helical segment. Over 64–72 (AKNRNLHSP) the chain is Cytoplasmic. Residues 73-93 (MYYFICCLAVSDLLVSVSNVL) traverse the membrane as a helical segment. Over 94-118 (ETAVMLLLEAGVLAAWAGVVQQLDN) the chain is Extracellular. A helical transmembrane segment spans residues 119-140 (AIDVFICGSMVSSLCFLGAIAV). Over 141–163 (DRYITIFYALRYHSIVTLPRARW) the chain is Cytoplasmic. A helical membrane pass occupies residues 164–183 (AIATIWAASVVCSTLFIAYY). The Extracellular segment spans residues 184-191 (DCTAVLLC). A helical membrane pass occupies residues 192–211 (LVSFFLALVVLMAVLYMHML). At 212 to 240 (ARACLHARSIARLHKRWRPVHQGLGLKGA) the chain is on the cytoplasmic side. A helical transmembrane segment spans residues 241-266 (ATLSILLGSFFLCWGPFFLHLTLIVL). Over 267–279 (CPQHPTCSCVFKN) the chain is Extracellular. A helical membrane pass occupies residues 280 to 300 (FKLFLTLIICNSIVDPLIYAF). Over 301–317 (RSQELRKTLKEVLLCSW) the chain is Cytoplasmic. Cys-315 carries S-palmitoyl cysteine lipidation.

The protein belongs to the G-protein coupled receptor 1 family. As to quaternary structure, interacts with MGRN1, but does not undergo MGRN1-mediated ubiquitination; this interaction competes with GNAS-binding and thus inhibits agonist-induced cAMP production. Interacts with OPN3; the interaction results in a decrease in MC1R-mediated cAMP signaling and ultimately a decrease in melanin production in melanocytes.

It localises to the cell membrane. Receptor for MSH (alpha, beta and gamma) and ACTH. The activity of this receptor is mediated by G proteins which activate adenylate cyclase. Mediates melanogenesis, the production of eumelanin (black/brown) and phaeomelanin (red/yellow), via regulation of cAMP signaling in melanocytes. The chain is Melanocyte-stimulating hormone receptor (MC1R) from Mammuthus primigenius (Siberian woolly mammoth).